The sequence spans 588 residues: Putative calcium-binding mitochondrial carrier F55A11.4 (588 aa).

The segment covering 1-14 (MINKNEQTESTSGA) has biased composition (polar residues). A disordered region spans residues 1–25 (MINKNEQTESTSGAAEQKEDDEEQY). EF-hand domains lie at 73–108 (EKERQIRDIYDRLDIDNDGTIDIRDLTLALKHETPH), 109–139 (IPANLAPVIMSKMSPDDEGRVDFYSFSSYVL), 140–175 (ENEQKLAEMFADMDRNHDGLVDVVEMKNYCKDIGVP), and 176–211 (LDDHKAQHIVNKMDQTGSASVDLKEFQEFMMLYPSS). Asp-86, Asp-88, Asp-90, Thr-92, and Asp-97 together coordinate Ca(2+). Asp-153, Asn-155, Asp-157, and Glu-164 together coordinate Ca(2+). 3 Solcar repeats span residues 246–332 (GIWW…LKRL), 342–428 (ISTF…LKRT), and 440–529 (PGVL…VRTG). 6 helical membrane passes run 252 to 269 (LVAGGAAGAVSRTCTAPF), 307 to 326 (GNGINVIKIAPESAIKFMCY), 352 to 365 (SAAGAISQSTIYPM), 403 to 422 (GYLPNLIGIIPYAGIDLAIY), 446 to 463 (LACGTCSSTCGQLSSYPF), and 504 to 523 (GITPNFLKVIPAVSISYVVY).

The protein belongs to the mitochondrial carrier (TC 2.A.29) family. Homodimer (via N-terminus).

It localises to the mitochondrion inner membrane. Functionally, mitochondrial and calcium-binding carrier that catalyzes the calcium-dependent exchange of cytoplasmic glutamate with mitochondrial aspartate across the mitochondrial inner membrane. This Caenorhabditis elegans protein is Putative calcium-binding mitochondrial carrier F55A11.4.